A 314-amino-acid chain; its full sequence is tRNA dimethylallyltransferase (314 aa).

Residue 10–17 (GPTGVGKT) coordinates ATP. 12 to 17 (TGVGKT) contacts substrate. Positions 35 to 38 (DSMQ) are interaction with substrate tRNA.

The protein belongs to the IPP transferase family. As to quaternary structure, monomer. Mg(2+) is required as a cofactor.

The enzyme catalyses adenosine(37) in tRNA + dimethylallyl diphosphate = N(6)-dimethylallyladenosine(37) in tRNA + diphosphate. In terms of biological role, catalyzes the transfer of a dimethylallyl group onto the adenine at position 37 in tRNAs that read codons beginning with uridine, leading to the formation of N6-(dimethylallyl)adenosine (i(6)A). In Finegoldia magna (strain ATCC 29328 / DSM 20472 / WAL 2508) (Peptostreptococcus magnus), this protein is tRNA dimethylallyltransferase.